Consider the following 897-residue polypeptide: DNA mismatch repair protein MutS (897 aa).

654–661 serves as a coordination point for ATP; sequence GPNMAGKS.

Belongs to the DNA mismatch repair MutS family.

Functionally, this protein is involved in the repair of mismatches in DNA. It is possible that it carries out the mismatch recognition step. This protein has a weak ATPase activity. In Maricaulis maris (strain MCS10) (Caulobacter maris), this protein is DNA mismatch repair protein MutS.